The sequence spans 819 residues: Solute carrier organic anion transporter family member 74D (819 aa).

The disordered stretch occupies residues 1 to 157 (MTKSNGDVEA…GSSAESSSSC (157 aa)). Topologically, residues 1–174 (MTKSNGDVEA…RWARRFASTH (174 aa)) are cytoplasmic. Composition is skewed to polar residues over residues 24–34 (GHGQLNGNGYH), 43–62 (SQAF…NGEV), and 71–81 (LYESTPSNNNE). Composition is skewed to low complexity over residues 91–111 (LKNG…NGHS) and 144–157 (DLNG…SSSC). The chain crosses the membrane as a helical span at residues 175-195 (VFMVVFLLAYILQGMYMTYFV). Topologically, residues 196–213 (SVITTIEKLFQIKSKTTG) are extracellular. Residues 214 to 234 (ILLSASEMGQICTAMLLTYFA) form a helical membrane-spanning segment. Residues 235–242 (GRGHRPRW) lie on the Cytoplasmic side of the membrane. The chain crosses the membrane as a helical span at residues 243–263 (IACGMVLFSIAAFSCALPHFI). The Extracellular segment spans residues 264-332 (FGEQLMHSSV…LEQASHSKIT (69 aa)). N-linked (GlcNAc...) asparagine glycans are attached at residues N284, N293, and N309. A helical membrane pass occupies residues 333 to 353 (VIVLCIFFGSLLSSGIGQTAV). Topologically, residues 354-373 (ATLGIPYIDDNVGSKQSPMY) are cytoplasmic. The helical transmembrane segment at 374–394 (MAVTIGMRILGPASGFIFGSF) threads the bilayer. Over 395–413 (CTRWYVNFSNPGFDATDPR) the chain is Extracellular. N401 carries N-linked (GlcNAc...) asparagine glycosylation. Residues 414-434 (WIGAWWLGPVAIGSLMLLASI) form a helical membrane-spanning segment. At 435–488 (AMFSFPKQLRGKQKPPGQTATPAAPVEPEEKPKLKDFPKTVRRQLSNDILMFRT) the chain is on the cytoplasmic side. Residues 444-466 (RGKQKPPGQTATPAAPVEPEEKP) form a disordered region. The chain crosses the membrane as a helical span at residues 489-509 (ASCVFHLLPIAGLYTFLPKYL). At 510-522 (ETQFRLATYDANM) the chain is on the extracellular side. Residues 523 to 543 (IAAFCGILVMGIGIVISGLFI) form a helical membrane-spanning segment. Residues 544–553 (LKRKPTARGV) lie on the Cytoplasmic side of the membrane. Residues 554-574 (AAWIAFTALVYSAGMIILMFI) form a helical membrane-spanning segment. At 575–667 (GCSMNDFAGY…NGYCDNNCKN (93 aa)) the chain is on the extracellular side. Positions 593-651 (ALIEPTCSAALNCTCDKENFAPICADGKMYISACHAGCSSSSLRPSDNRTLYSDCACIP) constitute a Kazal-like domain. Disulfide bonds link C599–C630, C607–C626, and C616–C649. The N-linked (GlcNAc...) asparagine glycan is linked to N604. N640 carries an N-linked (GlcNAc...) asparagine glycan. Residues 668–688 (FIYFILIFAICVFMHSTSEVG) form a helical membrane-spanning segment. At 689–707 (SMLLVMRCTHPKDKAMAMG) the chain is on the cytoplasmic side. A helical transmembrane segment spans residues 708–728 (VIQSAIGLFGNVPCPIIYGAV). Over 729 to 756 (VDSACLIWKSVCGKHGACSLYDADTFRQ) the chain is Extracellular. The helical transmembrane segment at 757-777 (YFLGITAGIMFLAFLMDLVVW) threads the bilayer. The Cytoplasmic segment spans residues 778–819 (RKAHRIDIAPEDPQEGGPASNGRTLEVSESKQPITPAPDTTV). The tract at residues 787 to 819 (PEDPQEGGPASNGRTLEVSESKQPITPAPDTTV) is disordered. The segment covering 807-819 (SKQPITPAPDTTV) has biased composition (polar residues).

Belongs to the organo anion transporter (TC 2.A.60) family.

The protein resides in the cell membrane. Its function is as follows. Transporter that mediates the cellular uptake of ecdysteroids, including ecdysone, from the hemolymph. This Drosophila melanogaster (Fruit fly) protein is Solute carrier organic anion transporter family member 74D.